The chain runs to 499 residues: Probable dipeptidase B (499 aa).

The active site involves Cys-26.

It belongs to the peptidase C69 family.

The catalysed reaction is an L-aminoacyl-L-amino acid + H2O = 2 an L-alpha-amino acid. The sequence is that of Probable dipeptidase B (pepDB) from Streptococcus pyogenes serotype M6 (strain ATCC BAA-946 / MGAS10394).